A 259-amino-acid polypeptide reads, in one-letter code: ATP synthase subunit b 3 (259 aa).

The helical transmembrane segment at 5-27 threads the bilayer; that stretch reads WWTLGLQAINVLILIWILSRFLF.

The protein belongs to the ATPase B chain family. As to quaternary structure, F-type ATPases have 2 components, F(1) - the catalytic core - and F(0) - the membrane proton channel. F(1) has five subunits: alpha(3), beta(3), gamma(1), delta(1), epsilon(1). F(0) has three main subunits: a(1), b(2) and c(10-14). The alpha and beta chains form an alternating ring which encloses part of the gamma chain. F(1) is attached to F(0) by a central stalk formed by the gamma and epsilon chains, while a peripheral stalk is formed by the delta and b chains.

The protein localises to the cell inner membrane. F(1)F(0) ATP synthase produces ATP from ADP in the presence of a proton or sodium gradient. F-type ATPases consist of two structural domains, F(1) containing the extramembraneous catalytic core and F(0) containing the membrane proton channel, linked together by a central stalk and a peripheral stalk. During catalysis, ATP synthesis in the catalytic domain of F(1) is coupled via a rotary mechanism of the central stalk subunits to proton translocation. In terms of biological role, component of the F(0) channel, it forms part of the peripheral stalk, linking F(1) to F(0). The chain is ATP synthase subunit b 3 from Beijerinckia indica subsp. indica (strain ATCC 9039 / DSM 1715 / NCIMB 8712).